The primary structure comprises 120 residues: U13-barytoxin-Tl1a (120 aa).

A signal peptide spans Met1–Ala20. 3 cysteine pairs are disulfide-bonded: Cys75-Cys90, Cys82-Cys95, and Cys89-Cys109.

Belongs to the neurotoxin 14 (magi-1) family. 05 (ICK-7) subfamily. ICK-7 sub-subfamily. As to expression, expressed by the venom gland.

It localises to the secreted. Ion channel inhibitor. This is U13-barytoxin-Tl1a from Trittame loki (Brush-footed trapdoor spider).